A 160-amino-acid chain; its full sequence is Cytochrome b6-f complex subunit 4 (160 aa).

The next 3 helical transmembrane spans lie at 36 to 56 (ILYMFPVVILGILACDVGLSI), 95 to 115 (LVGVLSMASVPAGLITVPFIE), and 127 to 147 (PIATSVFLVGTIVAVWLGIGA).

Belongs to the cytochrome b family. PetD subfamily. As to quaternary structure, the 4 large subunits of the cytochrome b6-f complex are cytochrome b6, subunit IV (17 kDa polypeptide, petD), cytochrome f and the Rieske protein, while the 4 small subunits are petG, petL, petM and petN. The complex functions as a dimer.

It localises to the plastid. It is found in the chloroplast thylakoid membrane. Functionally, component of the cytochrome b6-f complex, which mediates electron transfer between photosystem II (PSII) and photosystem I (PSI), cyclic electron flow around PSI, and state transitions. The protein is Cytochrome b6-f complex subunit 4 of Gracilaria tenuistipitata var. liui (Red alga).